The following is a 168-amino-acid chain: Diphosphoinositol polyphosphate phosphohydrolase 1 (168 aa).

Met1 carries the post-translational modification N-acetylmethionine. Residues Arg10, 18–20 (KKR), and 39–41 (SSR) each bind substrate. Positions 17 to 144 (YKKRAACLCF…VQASYFETLR (128 aa)) constitute a Nudix hydrolase domain. Mg(2+) is bound by residues Gly50 and Glu66. A Nudix box motif is present at residues 51-72 (GGMEPEEEPSVAAVREVCEEAG). The active-site Proton acceptor is Glu69. Glu70 lines the Mg(2+) pocket. Substrate is bound by residues 89–91 (RKH), Arg115, and Lys133.

It belongs to the Nudix hydrolase family. DIPP subfamily. Monomer. Requires Mg(2+) as cofactor. It depends on Mn(2+) as a cofactor. Zn(2+) serves as cofactor. In terms of tissue distribution, present in heart, lung, liver and spleen (at protein level). Widely expressed.

Its subcellular location is the cytoplasm. It is found in the nucleus. It catalyses the reaction diphospho-myo-inositol polyphosphate + H2O = myo-inositol polyphosphate + phosphate.. The catalysed reaction is 5-diphospho-1D-myo-inositol 1,2,3,4,6-pentakisphosphate + H2O = 1D-myo-inositol hexakisphosphate + phosphate + H(+). It carries out the reaction 3,5-bis(diphospho)-1D-myo-inositol 1,2,4,6-tetrakisphosphate + H2O = 3-diphospho-1D-myo-inositol 1,2,4,5,6-pentakisphosphate + phosphate + 2 H(+). The enzyme catalyses [phosphate](n+1) + n H2O = (n+1) phosphate + n H(+). It catalyses the reaction P(1),P(5)-bis(5'-adenosyl) pentaphosphate + H2O = ADP + ATP + 2 H(+). The catalysed reaction is P(1),P(6)-bis(5'-adenosyl) hexaphosphate + H2O = 2 ATP + 2 H(+). It carries out the reaction P(1),P(4)-bis(5'-adenosyl) tetraphosphate + H2O = AMP + ATP + 2 H(+). The enzyme catalyses a 5'-end (N(7)-methyl 5'-triphosphoguanosine)-ribonucleoside in mRNA + H2O = N(7)-methyl-GMP + a 5'-end diphospho-ribonucleoside in mRNA + 2 H(+). It catalyses the reaction a 5'-end (N(7)-methyl 5'-triphosphoguanosine)-ribonucleoside in mRNA + H2O = N(7)-methyl-GDP + a 5'-end phospho-ribonucleoside in mRNA + 2 H(+). In terms of biological role, cleaves a beta-phosphate from the diphosphate groups in PP-InsP5 (diphosphoinositol pentakisphosphate) and [PP]2-InsP4 (bisdiphosphoinositol tetrakisphosphate), suggesting that it may play a role in signal transduction. InsP6 (inositol hexakisphosphate) is not a substrate. Also able to catalyze the hydrolysis of dinucleoside oligophosphates, with diadenosine 5',5'''-P1,P6-hexaphosphate (Ap6A) and diadenosine 5',5'''- P1,P5-pentaphosphate (Ap5A) being the preferred substrates. The major reaction products are ADP and p4a from Ap6A and ADP and ATP from Ap5A. Also able to hydrolyze 5- phosphoribose 1-diphosphate. Acts as a negative regulator of the ERK1/2 pathway. Acts as a decapping enzyme that can hydrolyze both monomethylated and unmethylated capped RNAs. Hydrolyzes monomethylated capped RNA after both the alpha- and beta-phosphates generating m7GMP + ppRNA and m7GDP + pRNA. Modulates the stability of a subset of mRNAs implicated in cell motility. Divalent cations zinc, magnesium and manganese determine its substrate specificity. Exhibits diphosphoinositol polyphosphate phosphohydrolase in the presence of magnesium ions, diadenosine hexaphosphate hydrolase activity in the presence of manganese ions and endopolyphosphatase activity in the presence of zinc ions. Plays an important role in limiting DNA damage and maintaining cell survival upon oxidative stress via its endopolyphosphatase activity. The polypeptide is Diphosphoinositol polyphosphate phosphohydrolase 1 (Mus musculus (Mouse)).